Reading from the N-terminus, the 1342-residue chain is Putative aldehyde oxidase-like protein (1342 aa).

A disordered region spans residues 1 to 23 (MSDCNSGGGERRPNARATDAPPV). Positions 221-408 (ISSPREGWYC…LSIFIPHWAS (188 aa)) constitute an FAD-binding PCMH-type domain.

This sequence belongs to the xanthine dehydrogenase family.

The sequence is that of Putative aldehyde oxidase-like protein from Oryza sativa subsp. japonica (Rice).